We begin with the raw amino-acid sequence, 495 residues long: Altronate dehydratase (495 aa).

The protein belongs to the UxaA family. Fe(2+) is required as a cofactor. It depends on Mn(2+) as a cofactor.

It carries out the reaction D-altronate = 2-dehydro-3-deoxy-D-gluconate + H2O. Its pathway is carbohydrate metabolism; pentose and glucuronate interconversion. Is inhibited by high concentrations of Fe(2+) (&gt; 2 mM), and by EDTA or other iron chelators in vitro. In terms of biological role, catalyzes the dehydration of D-altronate. This is Altronate dehydratase (uxaA) from Escherichia coli (strain K12).